We begin with the raw amino-acid sequence, 687 residues long: Outer dynein arm-docking complex subunit 1 (687 aa).

Coiled coils occupy residues 100–193 (QVRV…YLNV), 222–267 (REEA…LKLK), and 341–421 (INEQ…LFTR). The segment at 126–147 (SRNSAHSKNARSPGCVQHDKVK) is disordered. Disordered regions lie at residues 363 to 388 (VSGRRSEEDRRAQQEQQRAELQQRVD), 487 to 511 (FPKKVAPPQPPDNLEDPPGFEAKDD), and 540 to 687 (ESTP…QSNY). A compositionally biased stretch (basic and acidic residues) spans 366–388 (RRSEEDRRAQQEQQRAELQQRVD). Positions 544 to 556 (SMTSSTQKVSSSS) are enriched in low complexity. 2 stretches are compositionally biased toward polar residues: residues 557–611 (RLVT…SSRG) and 620–629 (RSPNSSSYLG). Residues 660-680 (SPGPASSPGPASSTGQASSTS) show a composition bias toward low complexity.

Belongs to the ODA1/DCC2 family. In terms of assembly, component of the outer dynein arm-docking complex along with ODAD2, ODAD3, ODAD4 and CLXN. Interacts with ODAD3. Interacts with ODAD4; this interaction may facilitate the recruitment and/or attachment of outer dynein arm docking complex proteins, including ODAD1, ODAD3, and ODAD4 to ciliary axonemes. Interacts with DNAH9. Interacts with MNS1. Interacts with PIERCE1 and PIERCE2; the interactions link the outer dynein arms docking complex (ODA-DC) to the internal microtubule inner proteins (MIP) in cilium axoneme. In terms of tissue distribution, expressed in trachea multiciliated cells.

The protein resides in the cytoplasm. It is found in the cytoskeleton. The protein localises to the cilium axoneme. Component of the outer dynein arm-docking complex (ODA-DC) that mediates outer dynein arms (ODA) binding onto the doublet microtubule. Involved in mediating assembly of both ODAs and their axonemal docking complex onto ciliary microtubules. The chain is Outer dynein arm-docking complex subunit 1 (ODAD1) from Bos taurus (Bovine).